The following is a 1809-amino-acid chain: Proprotein convertase subtilisin/kexin type 5 (1809 aa).

A signal peptide spans 1–34 (MDWGWGSRCCRPGRRDLLCVLALLAGCLLPVCRT). Residues 35-116 (RVYTNHWAVK…QQVVKKRTKR (82 aa)) constitute a propeptide that is removed on maturation. The Extracellular portion of the chain corresponds to 117–1700 (DYDLSRAQST…DTVFHEHTKT (1584 aa)). In terms of domain architecture, Peptidase S8 spans 136 to 455 (MWYMHCSDNT…FGLMDAEAMV (320 aa)). Catalysis depends on charge relay system residues Asp173 and His214. N-linked (GlcNAc...) asparagine glycosylation is found at Asn227 and Asn383. Residue Ser388 is the Charge relay system of the active site. Residues 463–603 (TVPQQHVCVE…SLVLYGTSVQ (141 aa)) form the P/Homo B domain. Residues 521–523 (RGD) carry the Cell attachment site motif. FU repeat units lie at residues 632-682 (EDYA…GHFH), 685-732 (KKRC…GSYQ), 736-779 (KNIC…GQFF), 781-826 (GHDC…SYYL), 834-881 (YKSC…GEYI), 884-929 (QGHC…WKFE), 931-964 (KKQCHPCHHTCQGCQGSGPSNCTSCKAGEFQDSE), 965-1010 (YGEC…KTFG), 1012-1054 (KWEC…GFYG), 1058-1099 (LGEC…PTWP), 1137-1179 (TRQY…GTWL), 1183-1230 (SSSC…GFYA), 1232-1276 (DGVC…KHVA), 1278-1321 (EGVC…NFYP), 1323-1369 (MRQC…GTYK), 1373-1418 (NDEC…IEYW), 1422-1467 (SHRC…GYHT), 1471-1516 (SHQC…GYYG), 1520-1567 (SGRC…HYYA), 1571-1616 (AQTC…GEYR), and 1622-1669 (NFNC…SHPH). The CRM (Cys-rich motif) stretch occupies residues 638–1685 (CDPECSEVGC…DCQSSTDECI (1048 aa)). Asn667 carries N-linked (GlcNAc...) asparagine glycosylation. N-linked (GlcNAc...) asparagine glycosylation is found at Asn754, Asn804, and Asn854. Asn1642 and Asn1664 each carry an N-linked (GlcNAc...) asparagine glycan. A helical membrane pass occupies residues 1701–1721 (ALLVTSGAMLLLLLGAAVVVW). At 1722-1809 (RKSRSQPVAK…EYDDESYSYQ (88 aa)) the chain is on the cytoplasmic side. 2 AC regions span residues 1757-1776 (VIEYRDRDYDEDDEDDIVYM) and 1788-1809 (YGLLDEAEDDELEYDDESYSYQ).

Belongs to the peptidase S8 family. As to expression, expressed in the intestine, brain, adrenal gland, anterior pituitary, thyroid, ovaries, testis and lung. Highest levels are found in the gut, duodenum, jejunum and ileum. Expression is higher in female than in male reproductive organs.

The protein localises to the secreted. The protein resides in the endomembrane system. Serine endoprotease that processes various proproteins by cleavage at paired basic amino acids, recognizing the RXXX[KR]R consensus motif. Likely functions in the constitutive and regulated secretory pathways. Plays an essential role in pregnancy establishment by proteolytic activation of a number of important factors such as BMP2, CALD1 and alpha-integrins. May be responsible for the maturation of gastrointestinal peptides. May be involved in the cellular proliferation of adrenal cortex via the activation of growth factors. This is Proprotein convertase subtilisin/kexin type 5 (Pcsk5) from Rattus norvegicus (Rat).